The sequence spans 109 residues: Phosphoribosyl-AMP cyclohydrolase (109 aa).

Asp-76 is a binding site for Mg(2+). Cys-77 is a binding site for Zn(2+). Residues Asp-78 and Asp-80 each contribute to the Mg(2+) site. Zn(2+) is bound by residues Cys-93 and Cys-100.

The protein belongs to the PRA-CH family. In terms of assembly, homodimer. It depends on Mg(2+) as a cofactor. Zn(2+) is required as a cofactor.

It is found in the cytoplasm. It carries out the reaction 1-(5-phospho-beta-D-ribosyl)-5'-AMP + H2O = 1-(5-phospho-beta-D-ribosyl)-5-[(5-phospho-beta-D-ribosylamino)methylideneamino]imidazole-4-carboxamide. It participates in amino-acid biosynthesis; L-histidine biosynthesis; L-histidine from 5-phospho-alpha-D-ribose 1-diphosphate: step 3/9. Its function is as follows. Catalyzes the hydrolysis of the adenine ring of phosphoribosyl-AMP. The sequence is that of Phosphoribosyl-AMP cyclohydrolase from Streptococcus mutans serotype c (strain ATCC 700610 / UA159).